A 564-amino-acid polypeptide reads, in one-letter code: Arginine--tRNA ligase (564 aa).

The short motif at 122-132 (PNIAKPFSIGH) is the 'HIGH' region element.

Belongs to the class-I aminoacyl-tRNA synthetase family. Monomer.

It is found in the cytoplasm. The catalysed reaction is tRNA(Arg) + L-arginine + ATP = L-arginyl-tRNA(Arg) + AMP + diphosphate. This chain is Arginine--tRNA ligase, found in Lactococcus lactis subsp. cremoris (strain MG1363).